The primary structure comprises 397 residues: 2,3-bisphosphoglycerate-independent phosphoglycerate mutase (397 aa).

Belongs to the BPG-independent phosphoglycerate mutase family. A-PGAM subfamily.

The enzyme catalyses (2R)-2-phosphoglycerate = (2R)-3-phosphoglycerate. It functions in the pathway carbohydrate degradation; glycolysis; pyruvate from D-glyceraldehyde 3-phosphate: step 3/5. Functionally, catalyzes the interconversion of 2-phosphoglycerate and 3-phosphoglycerate. The chain is 2,3-bisphosphoglycerate-independent phosphoglycerate mutase (apgM) from Methanosarcina mazei (strain ATCC BAA-159 / DSM 3647 / Goe1 / Go1 / JCM 11833 / OCM 88) (Methanosarcina frisia).